The chain runs to 573 residues: Methionine--tRNA ligase (573 aa).

The short motif at 10–20 (PYVNSVPHLGN) is the 'HIGH' region element. The Zn(2+) site is built by Cys143, Cys146, Cys156, and Cys159. Residues 333–337 (KFSKS) carry the 'KMSKS' region motif. An ATP-binding site is contributed by Lys336.

This sequence belongs to the class-I aminoacyl-tRNA synthetase family. MetG type 1 subfamily. The cofactor is Zn(2+).

It is found in the cytoplasm. It carries out the reaction tRNA(Met) + L-methionine + ATP = L-methionyl-tRNA(Met) + AMP + diphosphate. Its function is as follows. Is required not only for elongation of protein synthesis but also for the initiation of all mRNA translation through initiator tRNA(fMet) aminoacylation. The protein is Methionine--tRNA ligase of Saccharolobus islandicus (strain M.14.25 / Kamchatka #1) (Sulfolobus islandicus).